The sequence spans 55 residues: Large ribosomal subunit protein bL33 (55 aa).

This sequence belongs to the bacterial ribosomal protein bL33 family.

This is Large ribosomal subunit protein bL33 from Xanthomonas oryzae pv. oryzae (strain PXO99A).